Reading from the N-terminus, the 527-residue chain is Peptide chain release factor 3 (527 aa).

The tr-type G domain occupies 9–278 (NKRRTFAIIS…GLTQWAPKPQ (270 aa)). Residues 18–25 (SHPDAGKT), 86–90 (DTPGH), and 140–143 (NKLD) each bind GTP.

Belongs to the TRAFAC class translation factor GTPase superfamily. Classic translation factor GTPase family. PrfC subfamily.

It is found in the cytoplasm. In terms of biological role, increases the formation of ribosomal termination complexes and stimulates activities of RF-1 and RF-2. It binds guanine nucleotides and has strong preference for UGA stop codons. It may interact directly with the ribosome. The stimulation of RF-1 and RF-2 is significantly reduced by GTP and GDP, but not by GMP. This chain is Peptide chain release factor 3, found in Haemophilus influenzae (strain PittEE).